The primary structure comprises 337 residues: Glyceraldehyde-3-phosphate dehydrogenase (337 aa).

Residues 12–13 (RI), Asp-34, and Arg-79 contribute to the NAD(+) site. Residues 150-152 (SCT), Thr-181, 210-211 (TG), and Arg-233 each bind D-glyceraldehyde 3-phosphate. Cys-151 serves as the catalytic Nucleophile. Residue Asn-315 coordinates NAD(+).

Belongs to the glyceraldehyde-3-phosphate dehydrogenase family. In terms of assembly, homotetramer.

It localises to the cytoplasm. It catalyses the reaction D-glyceraldehyde 3-phosphate + phosphate + NAD(+) = (2R)-3-phospho-glyceroyl phosphate + NADH + H(+). It participates in carbohydrate degradation; glycolysis; pyruvate from D-glyceraldehyde 3-phosphate: step 1/5. In Coccidioides posadasii (strain C735) (Valley fever fungus), this protein is Glyceraldehyde-3-phosphate dehydrogenase (GPD).